Reading from the N-terminus, the 323-residue chain is Lipid A biosynthesis myristoyltransferase (323 aa).

A helical transmembrane segment spans residues 23-43 (YWGAWLGVAAMAGIALTPPKF). Residues 139–144 (HGWAVD) carry the HXXXXD motif motif.

It belongs to the LpxL/LpxM/LpxP family. LpxM subfamily.

The protein localises to the cell inner membrane. The catalysed reaction is alpha-Kdo-(2-&gt;4)-alpha-Kdo-(2-&gt;6)-(dodecanoyl)-lipid IVA (E. coli) + tetradecanoyl-[ACP] = alpha-Kdo-(2-&gt;4)-alpha-Kdo-(2-&gt;6)-lipid A (E. coli) + holo-[ACP]. It catalyses the reaction (9Z)-hexadecenoyl-(Kdo)2-lipid IVA (E. coli) + tetradecanoyl-[ACP] = ((9Z)-hexadecenoyl-tetradecanoyl)-(Kdo)2-lipid A + holo-[ACP]. The protein operates within glycolipid biosynthesis; KDO(2)-lipid A biosynthesis; KDO(2)-lipid A from CMP-3-deoxy-D-manno-octulosonate and lipid IV(A): step 4/4. It functions in the pathway bacterial outer membrane biogenesis; lipopolysaccharide biosynthesis. In terms of biological role, catalyzes the transfer of myristate from myristoyl-[acyl-carrier-protein] (ACP) to Kdo(2)-(lauroyl)-lipid IV(A) to form Kdo(2)-lipid A. Can probably also catalyze the transfer of myristate to Kdo(2)-(palmitoleoyl)-lipid IV(A) to form the cold-adapted Kdo(2)-lipid A. In vitro, can acylate Kdo(2)-lipid IV(A), but acylation of (KDO)2-(lauroyl)-lipid IV(A) is about 100 times faster. In vitro, can use lauroyl-ACP but displays a slight kinetic preference for myristoyl-ACP. The chain is Lipid A biosynthesis myristoyltransferase from Escherichia coli (strain K12).